A 488-amino-acid polypeptide reads, in one-letter code: Protein nucleotidyltransferase YdiU (488 aa).

G91, G93, R94, K114, D126, G127, R177, and R184 together coordinate ATP. D253 acts as the Proton acceptor in catalysis. Residues N254 and D263 each coordinate Mg(2+). D263 provides a ligand contact to ATP.

Belongs to the SELO family. It depends on Mg(2+) as a cofactor. Mn(2+) is required as a cofactor.

It carries out the reaction L-seryl-[protein] + ATP = 3-O-(5'-adenylyl)-L-seryl-[protein] + diphosphate. It catalyses the reaction L-threonyl-[protein] + ATP = 3-O-(5'-adenylyl)-L-threonyl-[protein] + diphosphate. The catalysed reaction is L-tyrosyl-[protein] + ATP = O-(5'-adenylyl)-L-tyrosyl-[protein] + diphosphate. The enzyme catalyses L-histidyl-[protein] + UTP = N(tele)-(5'-uridylyl)-L-histidyl-[protein] + diphosphate. It carries out the reaction L-seryl-[protein] + UTP = O-(5'-uridylyl)-L-seryl-[protein] + diphosphate. It catalyses the reaction L-tyrosyl-[protein] + UTP = O-(5'-uridylyl)-L-tyrosyl-[protein] + diphosphate. Its function is as follows. Nucleotidyltransferase involved in the post-translational modification of proteins. It can catalyze the addition of adenosine monophosphate (AMP) or uridine monophosphate (UMP) to a protein, resulting in modifications known as AMPylation and UMPylation. This Bacillus thuringiensis subsp. konkukian (strain 97-27) protein is Protein nucleotidyltransferase YdiU.